Consider the following 252-residue polypeptide: Chitooligosaccharide deacetylase (252 aa).

Residues His-61 and His-125 each contribute to the Mg(2+) site.

It belongs to the YdjC deacetylase family. ChbG subfamily. As to quaternary structure, homodimer. The cofactor is Mg(2+).

The protein resides in the cytoplasm. The catalysed reaction is N,N'-diacetylchitobiose + H2O = N-acetyl-beta-D-glucosaminyl-(1-&gt;4)-D-glucosamine + acetate. It carries out the reaction diacetylchitobiose-6'-phosphate + H2O = N'-monoacetylchitobiose-6'-phosphate + acetate. Its pathway is glycan degradation; chitin degradation. Its function is as follows. Involved in the degradation of chitin. ChbG is essential for growth on the acetylated chitooligosaccharides chitobiose and chitotriose but is dispensable for growth on cellobiose and chitosan dimer, the deacetylated form of chitobiose. Deacetylation of chitobiose-6-P and chitotriose-6-P is necessary for both the activation of the chb promoter by the regulatory protein ChbR and the hydrolysis of phosphorylated beta-glucosides by the phospho-beta-glucosidase ChbF. Catalyzes the removal of only one acetyl group from chitobiose-6-P to yield monoacetylchitobiose-6-P, the inducer of ChbR and the substrate of ChbF. The sequence is that of Chitooligosaccharide deacetylase from Salmonella dublin (strain CT_02021853).